Here is a 222-residue protein sequence, read N- to C-terminus: Sugar fermentation stimulation protein homolog (222 aa).

It belongs to the SfsA family.

The sequence is that of Sugar fermentation stimulation protein homolog from Thermotoga neapolitana (strain ATCC 49049 / DSM 4359 / NBRC 107923 / NS-E).